Consider the following 317-residue polypeptide: Tenomodulin (317 aa).

Over 1–30 (MAKNPPENCEDCHILNAEAFKSKKICKSLK) the chain is Cytoplasmic. The chain crosses the membrane as a helical; Signal-anchor for type II membrane protein span at residues 31–50 (ICGLVFGILALTLIVLFWGS). The Extracellular segment spans residues 51-317 (KHFWPEVPKK…WWVARMLGRV (267 aa)). The BRICHOS domain maps to 93 to 186 (GNGTDETLEV…ICDNVTMYWI (94 aa)). The N-linked (GlcNAc...) asparagine glycan is linked to Asn94. A disulfide bridge links Cys120 with Cys178. N-linked (GlcNAc...) asparagine glycosylation is present at Asn180. Phosphoserine is present on Ser239.

Belongs to the chondromodulin-1 family. As to expression, highly expressed in hypovascular connective tissues such as tendons. Also has strong expression in adipose tissue.

Its subcellular location is the membrane. It is found in the nucleus envelope. The protein resides in the cytoplasm. Functionally, may be an angiogenesis inhibitor. In Homo sapiens (Human), this protein is Tenomodulin (TNMD).